We begin with the raw amino-acid sequence, 391 residues long: Sulfate adenylyltransferase (391 aa).

It belongs to the sulfate adenylyltransferase family.

It carries out the reaction sulfate + ATP + H(+) = adenosine 5'-phosphosulfate + diphosphate. It functions in the pathway sulfur metabolism; hydrogen sulfide biosynthesis; sulfite from sulfate: step 1/3. In Lactiplantibacillus plantarum (strain ATCC BAA-793 / NCIMB 8826 / WCFS1) (Lactobacillus plantarum), this protein is Sulfate adenylyltransferase.